A 365-amino-acid polypeptide reads, in one-letter code: Putative agmatine deiminase (365 aa).

Residues Glu214 and Asp220 each coordinate agmatine. Catalysis depends on Cys357, which acts as the Amidino-cysteine intermediate.

This sequence belongs to the agmatine deiminase family. In terms of assembly, tetramer of two homodimers.

It carries out the reaction agmatine + H2O = N-carbamoylputrescine + NH4(+). The sequence is that of Putative agmatine deiminase from Enterococcus faecalis (strain ATCC 700802 / V583).